The chain runs to 257 residues: Snake venom serine protease 3 (257 aa).

Positions 1 to 18 are cleaved as a signal peptide; sequence MVLIRVLANLLILQLSYA. Residues 19–24 constitute a propeptide that is removed on maturation; it reads QKSSEL. The Peptidase S1 domain occupies 25 to 248; it reads VIGGDECNIN…YTDWIQNIIA (224 aa). Cystine bridges form between cysteine 31–cysteine 163, cysteine 50–cysteine 66, cysteine 98–cysteine 255, cysteine 142–cysteine 209, cysteine 174–cysteine 188, and cysteine 199–cysteine 224. An N-linked (GlcNAc...) asparagine glycan is attached at asparagine 44. The active-site Charge relay system is the histidine 65. N-linked (GlcNAc...) asparagine glycosylation is present at asparagine 103. Aspartate 110 acts as the Charge relay system in catalysis. Asparagine 117 and asparagine 154 each carry an N-linked (GlcNAc...) asparagine glycan. The active-site Charge relay system is serine 203. A glycan (N-linked (GlcNAc...) asparagine) is linked at asparagine 250.

The protein belongs to the peptidase S1 family. Snake venom subfamily. As to quaternary structure, monomer. As to expression, expressed by the venom gland.

It localises to the secreted. Functionally, snake venom serine protease that may act in the hemostasis system of the prey. The protein is Snake venom serine protease 3 (TLF3) of Protobothrops flavoviridis (Habu).